Reading from the N-terminus, the 24-residue chain is Calcium-binding shell glycoprotein P50 (24 aa).

A disordered region spans residues 1-24 (KDALEHTGFAPKKDGEEHVEWNYN).

Glycosylated. Nacreous and prismatic layers of the shell.

In terms of biological role, calcium-binding. This Unio pictorum (Painter's mussel) protein is Calcium-binding shell glycoprotein P50.